The sequence spans 498 residues: Polyamine aminopropyltransferase (498 aa).

6 consecutive transmembrane segments (helical) span residues 7–27, 35–55, 67–87, 97–117, 134–154, and 163–183; these read ISVLIISSCGLVYELLAGTIA, VTQFSLIIGTYLFSMGVGSWL, FLEIELAIGLVGGFSSAILYL, IPLFLLVILIGILVGLEIPVL, VLSLDYVGALLASILFPIFFA, and GFIFGILNVGVALWGTWVLPL. A spermidine synthase region spans residues 196–446; sequence VVVLTLLILG…AGQRPIQFKK (251 aa). Residues 200–439 form the PABS domain; the sequence is TLLILGFSYS…GEWGFVLAGQ (240 aa). An S-methyl-5'-thioadenosine-binding site is contributed by Q234. Spermidine-binding residues include H264 and D288. Residues D308 and 342–343 contribute to the S-methyl-5'-thioadenosine site; that span reads DA. Residue D360 is the Proton acceptor of the active site.

The protein belongs to the spermidine/spermine synthase family. As to quaternary structure, homodimer or homotetramer.

It is found in the cell membrane. It catalyses the reaction S-adenosyl 3-(methylsulfanyl)propylamine + putrescine = S-methyl-5'-thioadenosine + spermidine + H(+). It participates in amine and polyamine biosynthesis; spermidine biosynthesis; spermidine from putrescine: step 1/1. In terms of biological role, catalyzes the irreversible transfer of a propylamine group from the amino donor S-adenosylmethioninamine (decarboxy-AdoMet) to putrescine (1,4-diaminobutane) to yield spermidine. The chain is Polyamine aminopropyltransferase from Leptospira interrogans serogroup Icterohaemorrhagiae serovar copenhageni (strain Fiocruz L1-130).